The primary structure comprises 52 residues: UPF0391 membrane protein XOO4217 (52 aa).

2 helical membrane passes run 5-25 (AMIF…GIAG) and 27-47 (ATNI…ISMF).

Belongs to the UPF0391 family.

It localises to the cell membrane. The polypeptide is UPF0391 membrane protein XOO4217 (Xanthomonas oryzae pv. oryzae (strain KACC10331 / KXO85)).